Reading from the N-terminus, the 1466-residue chain is DNA-directed RNA polymerase subunit beta'' (1466 aa).

Zn(2+) contacts are provided by Cys-220, Cys-296, Cys-303, and Cys-306. The segment at 618-725 (TREEDLEDEY…EDEYDSSEED (108 aa)) is disordered. Acidic residues-rich tracts occupy residues 621 to 631 (EDLEDEYETLE), 639 to 651 (DEYE…DEYG), and 707 to 725 (LEED…SEED).

It belongs to the RNA polymerase beta' chain family. RpoC2 subfamily. As to quaternary structure, in plastids the minimal PEP RNA polymerase catalytic core is composed of four subunits: alpha, beta, beta', and beta''. When a (nuclear-encoded) sigma factor is associated with the core the holoenzyme is formed, which can initiate transcription. It depends on Zn(2+) as a cofactor.

The protein localises to the plastid. The protein resides in the chloroplast. The catalysed reaction is RNA(n) + a ribonucleoside 5'-triphosphate = RNA(n+1) + diphosphate. Functionally, DNA-dependent RNA polymerase catalyzes the transcription of DNA into RNA using the four ribonucleoside triphosphates as substrates. The chain is DNA-directed RNA polymerase subunit beta'' from Agrostis stolonifera (Creeping bentgrass).